The following is a 643-amino-acid chain: MADDTGTEEGLGCSGWFCVEAIVDKTTENAISDDEDENVDDSGLDLVDFVDNSTVIHTKQVHAQALLNKQQAHADQEAVQALKRKLLGSPYESPVSDSQHSIDNELSPRLGGLTLCRGSQGAKRRLFQSLENRDSGYGYSEVEVQQTQVEHGHGAVHGTMGNGGAVGSELGVQENEEGSTTSTPTTRVVELLKCKNLHATLLGKFKELFGVSFGDLVRQFKSDKSSCTDWVIAAFGVNHSIAEGFNTLIKADSLYTHIQWLTCTWGMVLLMLIRFKCGKNRTTVSKGLSKLLNIPTNQLLIEPPRLQSVAAAIYWFRSGISNASIVTGDTPEWIQRQTILEHCFADAQFNLTEMVQWAYDNDITEDSDIAYEYAQRADRDSNAAAFLKSNCQAKYVKDCGVMCRHYKKAQMRRMSMGAWIKHRSAKIGDSGDWKPIVKFIRYQQIDFLAFMSAFKKFLHNIPKKSCLVLIGPPNTGKSQFGMSLINFLAGTVISFVNSHSHFWLQPLDSAKIAMLDDATPPCWTYLDIYLRNLLDGNPCSIDRKHKALTVVKCPPLLITSNTDIRTNDKWKYLYSRVSLFEFPNPFPLDTNGNPVYELNDKNWKSFFQRLWSSLEFQESEDEEDYGETGQTFRCVPGTVVRTV.

A Nuclear localization signal motif is present at residues 83 to 85 (KRK). Residues Ser-89, Ser-93, and Ser-107 each carry the phosphoserine; by host modification. A Nuclear export signal motif is present at residues 106-115 (LSPRLGGLTL). The disordered stretch occupies residues 155–184 (AVHGTMGNGGAVGSELGVQENEEGSTTSTP). The tract at residues 180–346 (TTSTPTTRVV…QTILEHCFAD (167 aa)) is DNA-binding region. Residues 445 to 595 (IDFLAFMSAF…FPLDTNGNPV (151 aa)) form the SF3 helicase domain. Position 471-478 (471-478 (GPPNTGKS)) interacts with ATP. Lys-552 is covalently cross-linked (Glycyl lysine isopeptide (Lys-Gly) (interchain with G-Cter in SUMO)).

This sequence belongs to the papillomaviridae E1 protein family. Can form hexamers. Interacts with E2 protein; this interaction increases E1 DNA binding specificity. Interacts with host DNA polymerase subunit POLA2. Interacts with host single stranded DNA-binding protein RPA1. Interacts with host TOP1; this interaction stimulates the enzymatic activity of TOP1. Phosphorylated. Post-translationally, sumoylated.

It is found in the host nucleus. It catalyses the reaction Couples ATP hydrolysis with the unwinding of duplex DNA by translocating in the 3'-5' direction.. It carries out the reaction ATP + H2O = ADP + phosphate + H(+). ATP-dependent DNA 3'-5' helicase required for initiation of viral DNA replication. It forms a complex with the viral E2 protein. The E1-E2 complex binds to the replication origin which contains binding sites for both proteins. During the initial step, a dimer of E1 interacts with a dimer of protein E2 leading to a complex that binds the viral origin of replication with high specificity. Then, a second dimer of E1 displaces the E2 dimer in an ATP-dependent manner to form the E1 tetramer. Following this, two E1 monomers are added to each half of the site, which results in the formation of two E1 trimers on the viral ori. Subsequently, two hexamers will be created. The double hexamer acts as a bi-directional helicase machinery and unwinds the viral DNA and then recruits the host DNA polymerase to start replication. The polypeptide is Replication protein E1 (Human papillomavirus 42).